The primary structure comprises 288 residues: MRGGAGAAEAPAAAGAATAAEAEAPPAAVEAWALRVAGWAPHDATRARLEAGLQQEERERVRKFRFEIDRHRALAGRVLIRTMVAEALRVDPAEIELKRTEMGKPFVARPDPGTFSFNLSHHGDWVVLMGHPSRAVGVDIMKYEQPKGTQSLEEFFTTMRNSFTPDEWGRIRLGATGNAVGAPHLRRFYKYWSLKEAYLKAIGIGIGFGLQRASFTLDEESGIAMLDLDGARDTQFTFRLSQLDDEHCVSVAVEHHAADGDAAPRIAWRRLAGIEVKDEEGVVLVDSK.

CoA contacts are provided by residues Arg-60, 99-104 (RTEMGK), and 118-121 (NLSH). Mg(2+) is bound by residues Asp-139 and Glu-196. A CoA-binding site is contributed by 196–200 (EAYLK).

This sequence belongs to the P-Pant transferase superfamily. AcpS family. As to quaternary structure, monomer.

The protein localises to the cytoplasm. The protein resides in the cytosol. The catalysed reaction is apo-[ACP] + CoA = holo-[ACP] + adenosine 3',5'-bisphosphate + H(+). The protein operates within lipid metabolism; fatty acid biosynthesis. In terms of biological role, phosphopantetheinyl transferase that is essential for attaching phosphopantetheine to ACP domains of the polyunsaturated fatty acid (PUFA) synthase converting the inactive apo-synthase to the active holo-synthase. This Thraustochytrium sp. (strain ATCC 26185 / S-3) protein is Phosphopantetheinyl transferase.